The sequence spans 228 residues: 2-C-methyl-D-erythritol 4-phosphate cytidylyltransferase (228 aa).

The protein belongs to the IspD/TarI cytidylyltransferase family. IspD subfamily.

It carries out the reaction 2-C-methyl-D-erythritol 4-phosphate + CTP + H(+) = 4-CDP-2-C-methyl-D-erythritol + diphosphate. It functions in the pathway isoprenoid biosynthesis; isopentenyl diphosphate biosynthesis via DXP pathway; isopentenyl diphosphate from 1-deoxy-D-xylulose 5-phosphate: step 2/6. Its function is as follows. Catalyzes the formation of 4-diphosphocytidyl-2-C-methyl-D-erythritol from CTP and 2-C-methyl-D-erythritol 4-phosphate (MEP). This chain is 2-C-methyl-D-erythritol 4-phosphate cytidylyltransferase, found in Geobacillus kaustophilus (strain HTA426).